Here is an 881-residue protein sequence, read N- to C-terminus: Valine--tRNA ligase (881 aa).

The short motif at 48-58 is the 'HIGH' region element; it reads PNITGKLHLGH. Residues 527–531 carry the 'KMSKS' region motif; the sequence is KMSKS. Residue K530 coordinates ATP. 2 coiled-coil regions span residues 721–747 and 811–881; these read KNETSENAMNQIIEAIKSIRNVRAEMN and LLDL…AALK.

It belongs to the class-I aminoacyl-tRNA synthetase family. ValS type 1 subfamily. In terms of assembly, monomer.

It is found in the cytoplasm. It carries out the reaction tRNA(Val) + L-valine + ATP = L-valyl-tRNA(Val) + AMP + diphosphate. In terms of biological role, catalyzes the attachment of valine to tRNA(Val). As ValRS can inadvertently accommodate and process structurally similar amino acids such as threonine, to avoid such errors, it has a 'posttransfer' editing activity that hydrolyzes mischarged Thr-tRNA(Val) in a tRNA-dependent manner. The protein is Valine--tRNA ligase of Clostridium acetobutylicum (strain ATCC 824 / DSM 792 / JCM 1419 / IAM 19013 / LMG 5710 / NBRC 13948 / NRRL B-527 / VKM B-1787 / 2291 / W).